Reading from the N-terminus, the 268-residue chain is Hydroxyethylthiazole kinase (268 aa).

Substrate is bound at residue methionine 47. ATP is bound by residues arginine 122 and threonine 168. A substrate-binding site is contributed by alanine 195.

It belongs to the Thz kinase family. Mg(2+) is required as a cofactor.

The enzyme catalyses 5-(2-hydroxyethyl)-4-methylthiazole + ATP = 4-methyl-5-(2-phosphooxyethyl)-thiazole + ADP + H(+). The protein operates within cofactor biosynthesis; thiamine diphosphate biosynthesis; 4-methyl-5-(2-phosphoethyl)-thiazole from 5-(2-hydroxyethyl)-4-methylthiazole: step 1/1. In terms of biological role, catalyzes the phosphorylation of the hydroxyl group of 4-methyl-5-beta-hydroxyethylthiazole (THZ). This is Hydroxyethylthiazole kinase from Rhizobium rhizogenes (strain K84 / ATCC BAA-868) (Agrobacterium radiobacter).